Consider the following 710-residue polypeptide: Assimilatory nitrate reductase catalytic subunit (710 aa).

The region spanning 19–77 (EKTYDTQCPFCSMQCKMQLVEQTIVTRKKYTAIGIDNPTTQGRLCIKGMNAHQHALNSS) is the 4Fe-4S Mo/W bis-MGD-type domain. Residues Cys26, Cys29, Cys33, and Cys63 each contribute to the [4Fe-4S] cluster site.

This sequence belongs to the prokaryotic molybdopterin-containing oxidoreductase family. The cofactor is [4Fe-4S] cluster. Mo-bis(molybdopterin guanine dinucleotide) serves as cofactor.

It participates in nitrogen metabolism; nitrate reduction (denitrification); dinitrogen from nitrate: step 1/4. Nitrate reductase is a key enzyme involved in the first step of nitrate assimilation in plants, fungi and bacteria. The sequence is that of Assimilatory nitrate reductase catalytic subunit (nasC) from Bacillus subtilis (strain 168).